The primary structure comprises 121 residues: Large ribosomal subunit protein uL22c (121 aa).

The protein belongs to the universal ribosomal protein uL22 family. As to quaternary structure, part of the 50S ribosomal subunit.

Its subcellular location is the plastid. It is found in the chloroplast. In terms of biological role, this protein binds specifically to 23S rRNA. The globular domain of the protein is located near the polypeptide exit tunnel on the outside of the subunit, while an extended beta-hairpin is found that lines the wall of the exit tunnel in the center of the 70S ribosome. The protein is Large ribosomal subunit protein uL22c (rpl22) of Guillardia theta (Cryptophyte).